Consider the following 425-residue polypeptide: Bifunctional phosphoribosylaminoimidazole carboxylase/phosphoribosylaminoimidazole succinocarboxamide synthetase (425 aa).

An N-acetylalanine modification is found at Ala2. The interval 2–260 (ATAVVVNIGK…WVADRVELLL (259 aa)) is SAICAR synthetase domain. Tyr22 is modified (phosphotyrosine). At Lys36 the chain carries N6-acetyllysine. Residue Ser107 is modified to Phosphoserine. Thr238 carries the phosphothreonine modification. At Lys247 the chain carries N6-acetyllysine. Residues 261 to 266 (KSDSQC) are linker. Residues 267–425 (RVVVLMGSTS…ADKKVRQCNL (159 aa)) form an AIR carboxylase domain region. Phosphoserine is present on Ser274. Ser332 provides a ligand contact to CO2.

It in the N-terminal section; belongs to the SAICAR synthetase family. This sequence in the C-terminal section; belongs to the AIR carboxylase family. Class II subfamily. In terms of assembly, homooctamer.

It carries out the reaction 5-amino-1-(5-phospho-D-ribosyl)imidazole-4-carboxylate + L-aspartate + ATP = (2S)-2-[5-amino-1-(5-phospho-beta-D-ribosyl)imidazole-4-carboxamido]succinate + ADP + phosphate + 2 H(+). The catalysed reaction is 5-amino-1-(5-phospho-D-ribosyl)imidazole-4-carboxylate + H(+) = 5-amino-1-(5-phospho-beta-D-ribosyl)imidazole + CO2. Its pathway is purine metabolism; IMP biosynthesis via de novo pathway; 5-amino-1-(5-phospho-D-ribosyl)imidazole-4-carboxamide from 5-amino-1-(5-phospho-D-ribosyl)imidazole-4-carboxylate: step 1/2. It functions in the pathway purine metabolism; IMP biosynthesis via de novo pathway; 5-amino-1-(5-phospho-D-ribosyl)imidazole-4-carboxylate from 5-amino-1-(5-phospho-D-ribosyl)imidazole (carboxylase route): step 1/1. Its function is as follows. Bifunctional phosphoribosylaminoimidazole carboxylase and phosphoribosylaminoimidazole succinocarboxamide synthetase catalyzing two reactions of the de novo purine biosynthetic pathway. The sequence is that of Bifunctional phosphoribosylaminoimidazole carboxylase/phosphoribosylaminoimidazole succinocarboxamide synthetase from Mus musculus (Mouse).